The primary structure comprises 294 residues: Protein C3orf33 (294 aa).

Ala2 carries the post-translational modification N-acetylalanine. A helical transmembrane segment spans residues 40–56 (ISTGMAIAGIMLLLRSI).

Highly expressed in ileocecal tissue and endometrium.

It localises to the membrane. The protein localises to the secreted. Secreted protein may play a role in transcription regulation via the MAPK3/MAPK1 pathway through an unidentified receptor on the plasma membrane. The sequence is that of Protein C3orf33 (C3orf33) from Homo sapiens (Human).